Consider the following 179-residue polypeptide: Large ribosomal subunit protein uL6 (179 aa).

This sequence belongs to the universal ribosomal protein uL6 family. In terms of assembly, part of the 50S ribosomal subunit.

Functionally, this protein binds to the 23S rRNA, and is important in its secondary structure. It is located near the subunit interface in the base of the L7/L12 stalk, and near the tRNA binding site of the peptidyltransferase center. This Syntrophus aciditrophicus (strain SB) protein is Large ribosomal subunit protein uL6.